Consider the following 379-residue polypeptide: Putative acetyl-CoA C-acetyltransferase VraB (379 aa).

Catalysis depends on Cys86, which acts as the Acyl-thioester intermediate. The active-site Proton acceptor is His338.

It belongs to the thiolase-like superfamily. Thiolase family.

This Staphylococcus aureus (strain MRSA252) protein is Putative acetyl-CoA C-acetyltransferase VraB (vraB).